A 288-amino-acid chain; its full sequence is Pirin-like protein CC_3178 (288 aa).

It belongs to the pirin family.

The polypeptide is Pirin-like protein CC_3178 (Caulobacter vibrioides (strain ATCC 19089 / CIP 103742 / CB 15) (Caulobacter crescentus)).